A 131-amino-acid chain; its full sequence is MAKRKVTNKKRVVKKNIARGIIHIAATFNNTSVTITDEMGNVICWSTAGALGFKGSKKSTPYAAQQAVEDAVVKAKEHGIKELGIKVQGPGSGRETAVKSLGSIEGIKVLWFKDVTPLPHNGCRPPKRRRV.

This sequence belongs to the universal ribosomal protein uS11 family. As to quaternary structure, part of the 30S ribosomal subunit. Interacts with proteins S7 and S18. Binds to IF-3.

Its function is as follows. Located on the platform of the 30S subunit, it bridges several disparate RNA helices of the 16S rRNA. Forms part of the Shine-Dalgarno cleft in the 70S ribosome. The protein is Small ribosomal subunit protein uS11 of Wolinella succinogenes (strain ATCC 29543 / DSM 1740 / CCUG 13145 / JCM 31913 / LMG 7466 / NCTC 11488 / FDC 602W) (Vibrio succinogenes).